The chain runs to 479 residues: HSPB1-associated protein 1 (479 aa).

The tract at residues 1-25 is disordered; the sequence is MEAGCEGSSPQTLGERTMGEEGERV. The segment at 88–208 is interaction with HSPB1; the sequence is ETECSYVDAT…EDTPFLYPTR (121 aa). Residues 124-288 enclose the JmjC domain; sequence WAYADYKYFV…HLARVEEAVT (165 aa). Residues 347-412 are disordered; the sequence is PRANGEEPGV…GDSQECTSRN (66 aa). The span at 356-369 shows a compositional bias: basic and acidic residues; the sequence is VQEHMEVEQARDPS.

As to quaternary structure, interacts with CRYAB and HSPB1. In terms of tissue distribution, widely expressed. Highly expressed by Sertoli cells in testis (at protein level).

It is found in the cytoplasm. May play a role in cellular stress response. This is HSPB1-associated protein 1 (Hspbap1) from Rattus norvegicus (Rat).